The sequence spans 1026 residues: MTRTQKGKTFLPHCFYQSLPPRLGWGMILNYSKLKGKEECASVSSVPMVFFSSQYRLHRKSQYLKMAAANLTFSQEVVWQRGLPSIPYSQYSFDHLYNTNDIIHTPQIRKARPQKPVSFKFLGSSSPLTGDTSLAVKTESSANPEKKLKKSKPASTVREAPRPLIHHPCMHPDMLGRPPSLDVNLEEREAWLLPPEKEARAWEATVLEKLNERTARWIQSKRPRRPGASPNKWQSFLRQQYDWSHIRDELTSASDLELLKQLEAEETAEFEDQSVILPPQEKKKPELLLPVYYRLPSYFQQAETVEIMPGNKSTEDIHEKTSLSQPQTQSYFRQVTPRAGKFAYSTDNTFEQEIYFDEVQIIHQIGAKRDQIVLENLNRYNKQLSKVFPETPEKWSAQAIPEASYRPVQGALRWTALPTPAKDMLLQVGEKDVPIKTRRLKKQAKSLQEDVTWELVVLRRMLKEWKTAWALIIEWHHETVENLLQSLGDLHDDVRIKAITTCATAALERPRIATSQRDSDKTIQDLPEVLLPALEAALCDKNAHVRMAAAICQYAIQSHNPLARNIMQTALLKGNSVDSWAAAQCLALEGTATYPVIKRILHQLFTKKNEDTEEQSYILLSYLSEKTTLIHTMLAVELNSCQWKNRIVACQAFSRISGNVCLDMKHKLIQLMWNDWNKEVRRAAAQALGQMSLGKEVHDIIRVKLGQGNSQERVEALYLIGELKLMTAKLLPSFLHCFSDDFTAVRRAACLAAGALQIRDKMVLECLLNLMQRDPYWKIKAFAIRALGQIGQVSPELTDLLLWAIHYEESPGVRLEACRSILALKLQGDRVRDTFLDVLLLENHDAVLKEMYQTMKILNLGNEGNQEMLQEIKNRIKTLSQKDLLTHKILKLEMVMGKVREEAKRVYLKPKGEQGPLTLQTLLQETFQDEMVLPRRPSEVCDTEAVIKPVKPRAPNPWLQSSVPGLTTRSKVRSSLVKDLRTSPEKRIAVGPFRSDYPALYLGKFSERTFFSPIMSSPSGKKGAHL.

The interval Ala-135 to Leu-175 is disordered. HEAT repeat units follow at residues Leu-530–Gln-568, Lys-724–Asp-760, and Lys-761–Ser-794.

The chain is HEAT repeat-containing protein 4 (HEATR4) from Homo sapiens (Human).